A 94-amino-acid polypeptide reads, in one-letter code: Co-chaperonin GroES (94 aa).

This sequence belongs to the GroES chaperonin family. As to quaternary structure, heptamer of 7 subunits arranged in a ring. Interacts with the chaperonin GroEL.

Its subcellular location is the cytoplasm. Together with the chaperonin GroEL, plays an essential role in assisting protein folding. The GroEL-GroES system forms a nano-cage that allows encapsulation of the non-native substrate proteins and provides a physical environment optimized to promote and accelerate protein folding. GroES binds to the apical surface of the GroEL ring, thereby capping the opening of the GroEL channel. This Heliobacterium modesticaldum (strain ATCC 51547 / Ice1) protein is Co-chaperonin GroES.